A 105-amino-acid chain; its full sequence is Phosphoribosyl-ATP pyrophosphatase (105 aa).

Belongs to the PRA-PH family.

Its subcellular location is the cytoplasm. It carries out the reaction 1-(5-phospho-beta-D-ribosyl)-ATP + H2O = 1-(5-phospho-beta-D-ribosyl)-5'-AMP + diphosphate + H(+). The protein operates within amino-acid biosynthesis; L-histidine biosynthesis; L-histidine from 5-phospho-alpha-D-ribose 1-diphosphate: step 2/9. The polypeptide is Phosphoribosyl-ATP pyrophosphatase (Ruegeria sp. (strain TM1040) (Silicibacter sp.)).